A 726-amino-acid polypeptide reads, in one-letter code: Catalase-peroxidase 1 (726 aa).

Residues 1-33 are disordered; sequence MSTSDDIHNTTATGKCPFHQGGHDQSAGAGTTT. Residues 105–226 constitute a cross-link (tryptophyl-tyrosyl-methioninium (Trp-Tyr) (with M-252)); sequence WHGAGTYRSI…LGATEMGLIY (122 aa). The Proton acceptor role is filled by histidine 106. The segment at residues 226 to 252 is a cross-link (tryptophyl-tyrosyl-methioninium (Tyr-Met) (with W-105)); it reads YVNPEGPDHSGEPLSAAAAIRATFGNM. Histidine 267 serves as a coordination point for heme b.

This sequence belongs to the peroxidase family. Peroxidase/catalase subfamily. As to quaternary structure, homodimer or homotetramer. Requires heme b as cofactor. Post-translationally, formation of the three residue Trp-Tyr-Met cross-link is important for the catalase, but not the peroxidase activity of the enzyme.

The catalysed reaction is H2O2 + AH2 = A + 2 H2O. The enzyme catalyses 2 H2O2 = O2 + 2 H2O. Its function is as follows. Bifunctional enzyme with both catalase and broad-spectrum peroxidase activity. The chain is Catalase-peroxidase 1 from Escherichia coli O157:H7.